Consider the following 359-residue polypeptide: 3-dehydroquinate synthase (359 aa).

NAD(+) contacts are provided by residues 70-75 (DAEGGK), 104-108 (GAATD), 128-129 (TT), Lys141, and Lys150. Zn(2+) contacts are provided by Glu183, His246, and His262.

Belongs to the sugar phosphate cyclases superfamily. Dehydroquinate synthase family. Requires Co(2+) as cofactor. Zn(2+) serves as cofactor. It depends on NAD(+) as a cofactor.

The protein resides in the cytoplasm. The enzyme catalyses 7-phospho-2-dehydro-3-deoxy-D-arabino-heptonate = 3-dehydroquinate + phosphate. The protein operates within metabolic intermediate biosynthesis; chorismate biosynthesis; chorismate from D-erythrose 4-phosphate and phosphoenolpyruvate: step 2/7. Functionally, catalyzes the conversion of 3-deoxy-D-arabino-heptulosonate 7-phosphate (DAHP) to dehydroquinate (DHQ). This is 3-dehydroquinate synthase from Mycolicibacterium gilvum (strain PYR-GCK) (Mycobacterium gilvum (strain PYR-GCK)).